Here is a 701-residue protein sequence, read N- to C-terminus: Elongation factor G (701 aa).

Positions 8–286 (ERIRNIGIIA…AVVYYLPSPV (279 aa)) constitute a tr-type G domain. Residues 17–24 (AHIDAGKT), 85–89 (DTPGH), and 139–142 (NKMD) contribute to the GTP site.

Belongs to the TRAFAC class translation factor GTPase superfamily. Classic translation factor GTPase family. EF-G/EF-2 subfamily.

It is found in the cytoplasm. Functionally, catalyzes the GTP-dependent ribosomal translocation step during translation elongation. During this step, the ribosome changes from the pre-translocational (PRE) to the post-translocational (POST) state as the newly formed A-site-bound peptidyl-tRNA and P-site-bound deacylated tRNA move to the P and E sites, respectively. Catalyzes the coordinated movement of the two tRNA molecules, the mRNA and conformational changes in the ribosome. This Roseiflexus castenholzii (strain DSM 13941 / HLO8) protein is Elongation factor G.